The sequence spans 382 residues: Anhydro-N-acetylmuramic acid kinase (382 aa).

22-29 (GTSMDGVD) serves as a coordination point for ATP.

Belongs to the anhydro-N-acetylmuramic acid kinase family.

The enzyme catalyses 1,6-anhydro-N-acetyl-beta-muramate + ATP + H2O = N-acetyl-D-muramate 6-phosphate + ADP + H(+). It participates in amino-sugar metabolism; 1,6-anhydro-N-acetylmuramate degradation. The protein operates within cell wall biogenesis; peptidoglycan recycling. In terms of biological role, catalyzes the specific phosphorylation of 1,6-anhydro-N-acetylmuramic acid (anhMurNAc) with the simultaneous cleavage of the 1,6-anhydro ring, generating MurNAc-6-P. Is required for the utilization of anhMurNAc either imported from the medium or derived from its own cell wall murein, and thus plays a role in cell wall recycling. In Burkholderia orbicola (strain MC0-3), this protein is Anhydro-N-acetylmuramic acid kinase.